Reading from the N-terminus, the 150-residue chain is UPF0098 protein CPn_0877/CP_0992/CPj0877/CpB0906 (150 aa).

This sequence belongs to the UPF0098 family.

The sequence is that of UPF0098 protein CPn_0877/CP_0992/CPj0877/CpB0906 from Chlamydia pneumoniae (Chlamydophila pneumoniae).